We begin with the raw amino-acid sequence, 808 residues long: Protein Ac66 (808 aa).

Over residues 132–141 the composition is skewed to pro residues; sequence PFSTPPPTQP. Residues 132 to 151 are disordered; the sequence is PFSTPPPTQPPESNVAGVGG.

As to quaternary structure, interacts with the putative E3 ligase IE0 and with viral ubiquitin/vUbi.

It is found in the host nucleus. The protein resides in the host cytoplasm. Plays an essential role in the efficient egress of nucleocapsids from the host nucleus to the cytoplasm. The sequence is that of Protein Ac66 (Ac66) from Lepidoptera (butterflies and moths).